The following is a 331-amino-acid chain: Calcium-binding and coiled-coil domain-containing protein 2 (331 aa).

The CLIR motif lies at 128 to 131 (IMVV). Residues 132 to 309 (INKEKVEEME…EKASWEKEKA (178 aa)) adopt a coiled-coil conformation. A disordered region spans residues 189–310 (KASWEKEKAS…KASWEKEKAP (122 aa)). Residues 190-193 (ASWE) carry the LIR-like motif. The segment at 292–302 (KEKASWEEEKA) is interaction with LGALS8.

This sequence belongs to the CALCOCO family. In terms of assembly, dimer. Part of a complex consisting of CALCOCO2, TAX1BP1 and MYO6. Interacts with MYO6. Interacts with GEMIN4. Interacts with ATG8 family members MAP1LC3A, MAP1LC3B, GABARAP, GABARAPL1 and GABARAPL2. Interacts with ATG8 family member MAP1LC3C. Interacts with LGALS8. Interacts with TOM1; the interaction is indirect and is mediated by MYO6, which acts as a bridge between TOM1 and CALCOCO2. Interacts with AZI2.

It is found in the cytoplasm. It localises to the perinuclear region. The protein resides in the cytoskeleton. Its subcellular location is the cytoplasmic vesicle. The protein localises to the autophagosome membrane. Its function is as follows. Xenophagy-specific receptor required for autophagy-mediated intracellular bacteria degradation. Acts as an effector protein of galectin-sensed membrane damage that restricts the proliferation of infecting pathogens upon entry into the cytosol by targeting LGALS8-associated bacteria for autophagy. Initially orchestrates bacteria targeting to autophagosomes and subsequently ensures pathogen degradation by regulating pathogen-containing autophagosome maturation. Bacteria targeting to autophagosomes relies on its interaction with MAP1LC3A, MAP1LC3B and/or GABARAPL2, whereas regulation of pathogen-containing autophagosome maturation requires the interaction with MAP3LC3C. May play a role in ruffle formation and actin cytoskeleton organization and seems to negatively regulate constitutive secretion. The polypeptide is Calcium-binding and coiled-coil domain-containing protein 2 (Mus musculus (Mouse)).